The sequence spans 619 residues: Probable transporter mch1 (619 aa).

The next 12 membrane-spanning stretches (helical) occupy residues 88-108, 120-140, 147-167, 184-204, 219-239, 261-281, 377-397, 428-448, 480-500, 515-535, 541-561, and 589-609; these read VISC…PLFL, AVSI…GYLC, PLAL…AFAY, VMVV…LAAV, IMLA…SQVA, FLFL…GLRI, TMWW…AYIN, IIAL…DFFA, LAFL…LSSP, LIGL…SVVW, GTNW…WGVI, and FWAV…ILAW.

It belongs to the major facilitator superfamily.

Its subcellular location is the vacuole membrane. In terms of biological role, probable transporter. This chain is Probable transporter mch1 (mch1), found in Aspergillus fumigatus (strain ATCC MYA-4609 / CBS 101355 / FGSC A1100 / Af293) (Neosartorya fumigata).